The primary structure comprises 157 residues: MSRRNAAEKRPVLPDPQFNSRLATMIVARLMKHGKKSTAQRILSDAFQLISQRSNGADPLEVFETAVRNATPLVEVRARRVGGATYQVPMEVRQERGTAMALRWLVNFSRTRNGRSMAQKLAGELIDAANEAGNTVRKREETHKMAEANKAFAHYRY.

The protein belongs to the universal ribosomal protein uS7 family. In terms of assembly, part of the 30S ribosomal subunit.

It is found in the plastid. The protein resides in the organellar chromatophore. In terms of biological role, one of the primary rRNA binding proteins, it binds directly to 16S rRNA where it nucleates assembly of the head domain of the 30S subunit. The protein is Small ribosomal subunit protein uS7c (rps7) of Paulinella chromatophora.